The chain runs to 305 residues: MKETDSLTCSDLRPARKAPQTAIGQVLIEALPYIRKFERKTFVIKYGGSAMKDLCLKNSFAQNVTLLRKVGINVVLVHGGGDAITKTAEKLGITSTFVHGKRVTDKEMISVVQMTLAGKVNQDIVQLISEHGGKAVGVTGLDADTIQAVPCRDAATLGLVGEIESINTAYIDLLCKAGLIPVIAPIGFDDDGNIYNINADDAASSIAIALKAEKLIYVSDVAGIQVGERILKTICKAEAADFIEQGIITGGMIPKVLSGFLTLDGGVRKIHIIDGKSVHSLLLEIFTHEGVGTQFISEQDDESNH.

Residues 80 to 81, Arg-102, and Asn-196 contribute to the substrate site; that span reads GG.

This sequence belongs to the acetylglutamate kinase family. ArgB subfamily.

The protein resides in the cytoplasm. The catalysed reaction is N-acetyl-L-glutamate + ATP = N-acetyl-L-glutamyl 5-phosphate + ADP. It functions in the pathway amino-acid biosynthesis; L-arginine biosynthesis; N(2)-acetyl-L-ornithine from L-glutamate: step 2/4. Catalyzes the ATP-dependent phosphorylation of N-acetyl-L-glutamate. This chain is Acetylglutamate kinase, found in Chlorobium luteolum (strain DSM 273 / BCRC 81028 / 2530) (Pelodictyon luteolum).